Consider the following 275-residue polypeptide: MANYTAADVKRLRELTGAGMLDSKNALVEADGDFDKAVELLRIKGAKDVGKRAERATAEGLVAAKDGALIELNSETDFVAKNAEFQALADQIVAAAVAAKANDIETLKAAKTGDTTVEQAIADLSAKIGEKLELRRAAYFDGTVEAYLHKRAADLPPAVGVLVEYQAGDADKGKEAAHAVALQIAALKAKYLTREDVPEDIVANERRIAEETARNEGKPEQALPKIVEGRVTGFYKDVVLLDQPSVSDNKKTVKALLDEAGVTVTRFVRFEVGQA.

K36 is covalently cross-linked (Isoglutamyl lysine isopeptide (Lys-Gln) (interchain with Q-Cter in protein Pup)). The involved in Mg(2+) ion dislocation from EF-Tu stretch occupies residues 76 to 79; sequence TDFV.

Belongs to the EF-Ts family.

The protein resides in the cytoplasm. In terms of biological role, associates with the EF-Tu.GDP complex and induces the exchange of GDP to GTP. It remains bound to the aminoacyl-tRNA.EF-Tu.GTP complex up to the GTP hydrolysis stage on the ribosome. The polypeptide is Elongation factor Ts (Mycolicibacterium smegmatis (strain ATCC 700084 / mc(2)155) (Mycobacterium smegmatis)).